A 251-amino-acid polypeptide reads, in one-letter code: Pyrroloquinoline-quinone synthase (251 aa).

The protein belongs to the PqqC family.

It carries out the reaction 6-(2-amino-2-carboxyethyl)-7,8-dioxo-1,2,3,4,7,8-hexahydroquinoline-2,4-dicarboxylate + 3 O2 = pyrroloquinoline quinone + 2 H2O2 + 2 H2O + H(+). It participates in cofactor biosynthesis; pyrroloquinoline quinone biosynthesis. In terms of biological role, ring cyclization and eight-electron oxidation of 3a-(2-amino-2-carboxyethyl)-4,5-dioxo-4,5,6,7,8,9-hexahydroquinoline-7,9-dicarboxylic-acid to PQQ. This is Pyrroloquinoline-quinone synthase from Klebsiella pneumoniae (strain 342).